We begin with the raw amino-acid sequence, 344 residues long: DNA-directed RNA polymerase subunit alpha (344 aa).

The segment at methionine 1–glutamate 232 is alpha N-terminal domain (alpha-NTD). An alpha C-terminal domain (alpha-CTD) region spans residues leucine 270–lysine 344.

It belongs to the RNA polymerase alpha chain family. In terms of assembly, in plastids the minimal PEP RNA polymerase catalytic core is composed of four subunits: alpha, beta, beta', and beta''. When a (nuclear-encoded) sigma factor is associated with the core the holoenzyme is formed, which can initiate transcription.

It localises to the plastid. The protein resides in the chloroplast. It catalyses the reaction RNA(n) + a ribonucleoside 5'-triphosphate = RNA(n+1) + diphosphate. DNA-dependent RNA polymerase catalyzes the transcription of DNA into RNA using the four ribonucleoside triphosphates as substrates. The sequence is that of DNA-directed RNA polymerase subunit alpha from Spirogyra maxima (Green alga).